Consider the following 372-residue polypeptide: tRNA pseudouridine synthase D (372 aa).

The active-site Nucleophile is the aspartate 85. In terms of domain architecture, TRUD spans 160–330 (GFANYFGYQR…MQGSRRFMWG (171 aa)).

It belongs to the pseudouridine synthase TruD family.

It catalyses the reaction uridine(13) in tRNA = pseudouridine(13) in tRNA. Its function is as follows. Responsible for synthesis of pseudouridine from uracil-13 in transfer RNAs. In Campylobacter jejuni subsp. jejuni serotype O:2 (strain ATCC 700819 / NCTC 11168), this protein is tRNA pseudouridine synthase D.